A 348-amino-acid polypeptide reads, in one-letter code: Benzoate 1,2-dioxygenase electron transfer component (348 aa).

The 96-residue stretch at 14–109 folds into the 2Fe-2S ferredoxin-type domain; that stretch reads HQVALQFEDG…DAVFQIQASS (96 aa). The [2Fe-2S] cluster site is built by Cys51, Cys56, Cys59, and Cys93. A ferredoxin-reductase region spans residues 111–348; that stretch reads VCKTKIHHFE…NFLFEKFSAN (238 aa). The 102-residue stretch at 116-217 folds into the FAD-binding FR-type domain; sequence IHHFEGTLAR…TGPFGSFYLR (102 aa).

It belongs to the bacterial ring-hydroxylating dioxygenase ferredoxin reductase family. In terms of assembly, this dioxygenase system consists of three proteins: the two subunits of the hydroxylase component (BenA and BenB), and an electron transfer component (BenC). FAD is required as a cofactor. Requires [2Fe-2S] cluster as cofactor.

The catalysed reaction is 2 reduced [2Fe-2S]-[ferredoxin] + NAD(+) + H(+) = 2 oxidized [2Fe-2S]-[ferredoxin] + NADH. It participates in xenobiotic degradation; toluene degradation. Its function is as follows. Electron transfer component of benzoate 1,2-dioxygenase system. The protein is Benzoate 1,2-dioxygenase electron transfer component (benC) of Acinetobacter baylyi (strain ATCC 33305 / BD413 / ADP1).